A 441-amino-acid polypeptide reads, in one-letter code: Transcription factor bHLH90 (441 aa).

The bHLH domain maps to 260-309 (NFKSKNLHSERKRRERINQAMYGLRAVVPKITKLNKIGIFSDAVDYINEL).

In terms of assembly, homodimer. In terms of tissue distribution, expressed constitutively in roots, leaves, stems, and flowers.

Its subcellular location is the nucleus. The protein is Transcription factor bHLH90 (BHLH90) of Arabidopsis thaliana (Mouse-ear cress).